The chain runs to 430 residues: Protein translocase subunit SecY (430 aa).

10 helical membrane-spanning segments follow: residues 18–38 (IFFT…PAPG), 68–88 (FSIF…MQLL), 117–137 (LAIS…NNYL), 147–167 (IMSY…LIWL), 179–199 (GISI…LIQF), 217–237 (VLGL…VLEA), 269–289 (GVIP…LTLF), 308–328 (NVGM…YAFV), 368–388 (FVGS…TKFM), and 389–409 (GLPQ…GVAI).

The protein belongs to the SecY/SEC61-alpha family. In terms of assembly, component of the Sec protein translocase complex. Heterotrimer consisting of SecY, SecE and SecG subunits. The heterotrimers can form oligomers, although 1 heterotrimer is thought to be able to translocate proteins. Interacts with the ribosome. Interacts with SecDF, and other proteins may be involved. Interacts with SecA.

Its subcellular location is the cell membrane. In terms of biological role, the central subunit of the protein translocation channel SecYEG. Consists of two halves formed by TMs 1-5 and 6-10. These two domains form a lateral gate at the front which open onto the bilayer between TMs 2 and 7, and are clamped together by SecE at the back. The channel is closed by both a pore ring composed of hydrophobic SecY resides and a short helix (helix 2A) on the extracellular side of the membrane which forms a plug. The plug probably moves laterally to allow the channel to open. The ring and the pore may move independently. The protein is Protein translocase subunit SecY of Staphylococcus aureus (strain NCTC 8325 / PS 47).